Here is a 377-residue protein sequence, read N- to C-terminus: Mannan endo-1,4-beta-mannosidase A (377 aa).

The signal sequence occupies residues 1–18; that stretch reads MKLSHMLLSLASLGVATA. Trp84 contacts substrate. Asn105 carries an N-linked (GlcNAc...) asparagine glycan. Asn197 is a binding site for substrate. Catalysis depends on Glu198, which acts as the Proton donor. Asn255 carries an N-linked (GlcNAc...) asparagine glycan. Tyr273 contacts substrate. Residue Glu306 is the Nucleophile of the active site. The N-linked (GlcNAc...) asparagine glycan is linked to Asn326. A substrate-binding site is contributed by Trp336. The N-linked (GlcNAc...) asparagine glycan is linked to Asn357.

Belongs to the glycosyl hydrolase 5 (cellulase A) family.

The protein localises to the secreted. It catalyses the reaction Random hydrolysis of (1-&gt;4)-beta-D-mannosidic linkages in mannans, galactomannans and glucomannans.. Its function is as follows. Endo-1,4-mannanase, a crucial enzyme for depolymerization of seed galactomannans and wood galactoglucomannans. The protein is Mannan endo-1,4-beta-mannosidase A (manA) of Aspergillus aculeatus.